The primary structure comprises 38 residues: Large ribosomal subunit protein bL36A (38 aa).

This sequence belongs to the bacterial ribosomal protein bL36 family.

This is Large ribosomal subunit protein bL36A from Prochlorococcus marinus (strain MIT 9515).